The sequence spans 271 residues: Formamidopyrimidine-DNA glycosylase (271 aa).

Catalysis depends on P2, which acts as the Schiff-base intermediate with DNA. The active-site Proton donor is E3. K57 acts as the Proton donor; for beta-elimination activity in catalysis. DNA is bound by residues H90, R109, and K151. The FPG-type zinc-finger motif lies at 236-270 (HVYGRGGETCTQCGHLLSEIKLGQRATVFCSLCQK). The Proton donor; for delta-elimination activity role is filled by R260.

Belongs to the FPG family. Monomer. Requires Zn(2+) as cofactor.

The enzyme catalyses Hydrolysis of DNA containing ring-opened 7-methylguanine residues, releasing 2,6-diamino-4-hydroxy-5-(N-methyl)formamidopyrimidine.. It catalyses the reaction 2'-deoxyribonucleotide-(2'-deoxyribose 5'-phosphate)-2'-deoxyribonucleotide-DNA = a 3'-end 2'-deoxyribonucleotide-(2,3-dehydro-2,3-deoxyribose 5'-phosphate)-DNA + a 5'-end 5'-phospho-2'-deoxyribonucleoside-DNA + H(+). Functionally, involved in base excision repair of DNA damaged by oxidation or by mutagenic agents. Acts as a DNA glycosylase that recognizes and removes damaged bases. Has a preference for oxidized purines, such as 7,8-dihydro-8-oxoguanine (8-oxoG). Has AP (apurinic/apyrimidinic) lyase activity and introduces nicks in the DNA strand. Cleaves the DNA backbone by beta-delta elimination to generate a single-strand break at the site of the removed base with both 3'- and 5'-phosphates. The sequence is that of Formamidopyrimidine-DNA glycosylase from Shewanella halifaxensis (strain HAW-EB4).